A 155-amino-acid chain; its full sequence is Protein phosphatase 1 regulatory subunit 17 (155 aa).

A disordered region spans residues 41–73; that stretch reads KKKPRKGKNVQATLNVESDQKKPRRKDTPALHI. Residues 58 to 69 show a composition bias toward basic and acidic residues; that stretch reads SDQKKPRRKDTP. A phosphothreonine; by PKG/PRKG1 mark is found at threonine 68 and threonine 119.

In terms of processing, substrate for cGMP-dependent protein kinase. Phosphorylated by PRKG1 isoform alpha. Phosphorylation of Thr-68 and Thr-119 is required for its phosphatase activity. Substrate for cGMP-dependent protein kinase. Highly expressed in cerebellum.

Its function is as follows. Inhibits phosphatase activities of protein phosphatase 1 (PP1) and protein phosphatase 2A (PP2A) complexes. This Homo sapiens (Human) protein is Protein phosphatase 1 regulatory subunit 17 (PPP1R17).